The chain runs to 259 residues: Global transcriptional regulator CodY (259 aa).

The segment at 1–155 is GAF domain; sequence MELLAKTRKL…SSTVVGMEIL (155 aa). The segment at residues 203–222 is a DNA-binding region (H-T-H motif); sequence ASKIADRVGITRSVIVNALR. A Phosphoserine modification is found at Ser215.

Belongs to the CodY family.

The protein resides in the cytoplasm. DNA-binding global transcriptional regulator which is involved in the adaptive response to starvation and acts by directly or indirectly controlling the expression of numerous genes in response to nutrient availability. During rapid exponential growth, CodY is highly active and represses genes whose products allow adaptation to nutrient depletion. The protein is Global transcriptional regulator CodY of Bacillus cereus (strain B4264).